Consider the following 483-residue polypeptide: tRNA-2-methylthio-N(6)-dimethylallyladenosine synthase (483 aa).

The region spanning 31–148 (KKLYIETQGC…LPQMLDQHHA (118 aa)) is the MTTase N-terminal domain. [4Fe-4S] cluster contacts are provided by cysteine 40, cysteine 77, cysteine 111, cysteine 192, cysteine 196, and cysteine 199. The region spanning 178–410 (RVEGFKAFVS…QQVIKQSSIE (233 aa)) is the Radical SAM core domain. A TRAM domain is found at 413-477 (DAMLGKIERV…LNLVYGELLN (65 aa)).

The protein belongs to the methylthiotransferase family. MiaB subfamily. In terms of assembly, monomer. [4Fe-4S] cluster serves as cofactor.

The protein localises to the cytoplasm. It carries out the reaction N(6)-dimethylallyladenosine(37) in tRNA + (sulfur carrier)-SH + AH2 + 2 S-adenosyl-L-methionine = 2-methylsulfanyl-N(6)-dimethylallyladenosine(37) in tRNA + (sulfur carrier)-H + 5'-deoxyadenosine + L-methionine + A + S-adenosyl-L-homocysteine + 2 H(+). Its function is as follows. Catalyzes the methylthiolation of N6-(dimethylallyl)adenosine (i(6)A), leading to the formation of 2-methylthio-N6-(dimethylallyl)adenosine (ms(2)i(6)A) at position 37 in tRNAs that read codons beginning with uridine. The polypeptide is tRNA-2-methylthio-N(6)-dimethylallyladenosine synthase (Acinetobacter baumannii (strain AB0057)).